The following is a 198-amino-acid chain: Outer-membrane lipoprotein carrier protein (198 aa).

A signal peptide spans 1 to 17; sequence MKKFLFSLCLLSSTVLA.

It belongs to the LolA family. In terms of assembly, monomer.

The protein localises to the periplasm. In terms of biological role, participates in the translocation of lipoproteins from the inner membrane to the outer membrane. Only forms a complex with a lipoprotein if the residue after the N-terminal Cys is not an aspartate (The Asp acts as a targeting signal to indicate that the lipoprotein should stay in the inner membrane). This Aliivibrio fischeri (strain MJ11) (Vibrio fischeri) protein is Outer-membrane lipoprotein carrier protein.